The chain runs to 385 residues: Mitochondrial protein C2orf69 (385 aa).

A mitochondrion-targeting transit peptide spans 1 to 24; the sequence is MWGFRLLRSPPLLLLLPQLGIGNA.

The protein belongs to the C2orf69 family.

The protein resides in the mitochondrion matrix. In terms of biological role, may play a role in the respiratory chain. The sequence is that of Mitochondrial protein C2orf69 (C2orf69) from Homo sapiens (Human).